The chain runs to 367 residues: Glutamate 5-kinase (367 aa).

ATP is bound at residue lysine 8. Substrate-binding residues include serine 49, aspartate 136, and asparagine 148. Residues threonine 168–aspartate 169 and threonine 210–lysine 216 contribute to the ATP site. A PUA domain is found at threonine 275–glutamate 353.

Belongs to the glutamate 5-kinase family.

It localises to the cytoplasm. The catalysed reaction is L-glutamate + ATP = L-glutamyl 5-phosphate + ADP. The protein operates within amino-acid biosynthesis; L-proline biosynthesis; L-glutamate 5-semialdehyde from L-glutamate: step 1/2. Its function is as follows. Catalyzes the transfer of a phosphate group to glutamate to form L-glutamate 5-phosphate. In Synechococcus elongatus (strain ATCC 33912 / PCC 7942 / FACHB-805) (Anacystis nidulans R2), this protein is Glutamate 5-kinase.